We begin with the raw amino-acid sequence, 518 residues long: Sensory neuron membrane protein 1 (518 aa).

Topologically, residues 1–8 are cytoplasmic; sequence MKTAEKLG. Residues 9–29 form a helical membrane-spanning segment; the sequence is IIGTTISIFGIGFGWGVFPWL. The Extracellular portion of the chain corresponds to 30 to 456; sequence IRMQIGRVSL…ELFRILQFLD (427 aa). Asn64, Asn186, Asn225, Asn316, Asn334, and Asn381 each carry an N-linked (GlcNAc...) asparagine glycan. Disulfide bonds link Cys265–Cys330, Cys294–Cys349, and Cys332–Cys338. The chain crosses the membrane as a helical span at residues 457–477; that stretch reads VIKWVITLFGAGVVSGGVGLY. Over 478–518 the chain is Cytoplasmic; that stretch reads YKEKNSLPITPTSSATSKKIDNPTDKTTTHELGHTNFGYIN.

Belongs to the CD36 family.

It localises to the cell membrane. Its function is as follows. Plays an olfactory role that is not restricted to pheromone sensitivity. This is Sensory neuron membrane protein 1 from Pediculus humanus subsp. corporis (Body louse).